The following is a 266-amino-acid chain: Heat-inducible transcription repressor HrcA (266 aa).

It belongs to the HrcA family.

Its function is as follows. Negative regulator of class I heat shock genes (grpE-dnaK-dnaJ and groELS operons). Prevents heat-shock induction of these operons. The chain is Heat-inducible transcription repressor HrcA from Helicobacter pylori (strain ATCC 700392 / 26695) (Campylobacter pylori).